The primary structure comprises 236 residues: Phosphoribosylaminoimidazole-succinocarboxamide synthase (236 aa).

It belongs to the SAICAR synthetase family.

The catalysed reaction is 5-amino-1-(5-phospho-D-ribosyl)imidazole-4-carboxylate + L-aspartate + ATP = (2S)-2-[5-amino-1-(5-phospho-beta-D-ribosyl)imidazole-4-carboxamido]succinate + ADP + phosphate + 2 H(+). Its pathway is purine metabolism; IMP biosynthesis via de novo pathway; 5-amino-1-(5-phospho-D-ribosyl)imidazole-4-carboxamide from 5-amino-1-(5-phospho-D-ribosyl)imidazole-4-carboxylate: step 1/2. The protein is Phosphoribosylaminoimidazole-succinocarboxamide synthase of Rickettsia felis (strain ATCC VR-1525 / URRWXCal2) (Rickettsia azadi).